A 379-amino-acid chain; its full sequence is 1-deoxy-D-xylulose 5-phosphate reductoisomerase (379 aa).

NADPH contacts are provided by threonine 10, glycine 11, serine 12, isoleucine 13, asparagine 39, and asparagine 121. Lysine 122 is a 1-deoxy-D-xylulose 5-phosphate binding site. Glutamate 123 is a binding site for NADPH. Aspartate 147 lines the Mn(2+) pocket. 4 residues coordinate 1-deoxy-D-xylulose 5-phosphate: serine 148, glutamate 149, serine 173, and histidine 196. Glutamate 149 lines the Mn(2+) pocket. Glycine 202 provides a ligand contact to NADPH. Positions 209, 214, 215, and 218 each coordinate 1-deoxy-D-xylulose 5-phosphate. Glutamate 218 provides a ligand contact to Mn(2+).

This sequence belongs to the DXR family. Requires Mg(2+) as cofactor. Mn(2+) serves as cofactor.

The catalysed reaction is 2-C-methyl-D-erythritol 4-phosphate + NADP(+) = 1-deoxy-D-xylulose 5-phosphate + NADPH + H(+). It functions in the pathway isoprenoid biosynthesis; isopentenyl diphosphate biosynthesis via DXP pathway; isopentenyl diphosphate from 1-deoxy-D-xylulose 5-phosphate: step 1/6. In terms of biological role, catalyzes the NADPH-dependent rearrangement and reduction of 1-deoxy-D-xylulose-5-phosphate (DXP) to 2-C-methyl-D-erythritol 4-phosphate (MEP). This is 1-deoxy-D-xylulose 5-phosphate reductoisomerase from Chlamydia pneumoniae (Chlamydophila pneumoniae).